The primary structure comprises 459 residues: Bifunctional protein GlmU (459 aa).

The interval 1–230 is pyrophosphorylase; it reads MSNRFAVILA…FDETLGVNDR (230 aa). Residues 9–12, Lys23, Gln73, and 78–79 contribute to the UDP-N-acetyl-alpha-D-glucosamine site; these read LAAG and GT. Asp103 serves as a coordination point for Mg(2+). 4 residues coordinate UDP-N-acetyl-alpha-D-glucosamine: Gly140, Glu155, Asn170, and Asn228. Asn228 provides a ligand contact to Mg(2+). Residues 231-251 form a linker region; the sequence is VALSQAEIIMKNRINRKNMVN. The segment at 252 to 459 is N-acetyltransferase; it reads GVTIIDPSNT…VDQLLNKKKS (208 aa). The UDP-N-acetyl-alpha-D-glucosamine site is built by Arg333 and Lys351. His363 acts as the Proton acceptor in catalysis. Tyr366 and Asn377 together coordinate UDP-N-acetyl-alpha-D-glucosamine. Acetyl-CoA-binding positions include 386–387, Ala423, and Arg440; that span reads NY.

In the N-terminal section; belongs to the N-acetylglucosamine-1-phosphate uridyltransferase family. This sequence in the C-terminal section; belongs to the transferase hexapeptide repeat family. Homotrimer. Mg(2+) is required as a cofactor.

It is found in the cytoplasm. It catalyses the reaction alpha-D-glucosamine 1-phosphate + acetyl-CoA = N-acetyl-alpha-D-glucosamine 1-phosphate + CoA + H(+). The catalysed reaction is N-acetyl-alpha-D-glucosamine 1-phosphate + UTP + H(+) = UDP-N-acetyl-alpha-D-glucosamine + diphosphate. The protein operates within nucleotide-sugar biosynthesis; UDP-N-acetyl-alpha-D-glucosamine biosynthesis; N-acetyl-alpha-D-glucosamine 1-phosphate from alpha-D-glucosamine 6-phosphate (route II): step 2/2. It participates in nucleotide-sugar biosynthesis; UDP-N-acetyl-alpha-D-glucosamine biosynthesis; UDP-N-acetyl-alpha-D-glucosamine from N-acetyl-alpha-D-glucosamine 1-phosphate: step 1/1. It functions in the pathway bacterial outer membrane biogenesis; LPS lipid A biosynthesis. Catalyzes the last two sequential reactions in the de novo biosynthetic pathway for UDP-N-acetylglucosamine (UDP-GlcNAc). The C-terminal domain catalyzes the transfer of acetyl group from acetyl coenzyme A to glucosamine-1-phosphate (GlcN-1-P) to produce N-acetylglucosamine-1-phosphate (GlcNAc-1-P), which is converted into UDP-GlcNAc by the transfer of uridine 5-monophosphate (from uridine 5-triphosphate), a reaction catalyzed by the N-terminal domain. The sequence is that of Bifunctional protein GlmU from Bacillus thuringiensis subsp. konkukian (strain 97-27).